Reading from the N-terminus, the 493-residue chain is MSALGVSVALLVWVAVLLLVSIWRQVHSSWNLPPGPFPLPIIGNLFQLELKNIPKSFTRLAQRFGPVFTLYVGSRRVVVVHGYKAVREVLLDHKDEFSGRGDIPAFHAHRDRGIIFNNGPTWKDIRRFSLTTLRNYGMGKQGNESRIQREAHFLLEALRKTQGQPFDPTFLIGCAPCNVIADILFRKHFDYNDEKFLRLMYLFNENFQLLSTPWLQLYNNFPSLLHYLPGSHRKVMKNVAEIKEYVSERVKEHLQSLDPNCPRDLTDCLLVEMEKEKHSAERLYTMDGITVTVADLFFAGTETTSTTLRYGLLILMKYPEIEEKLHEEIDRVIGPSRIPAIKDRQEMPYMDAVVHEIQRFITLVPSNLPHEATRDTIFRGYIIPKGTVIVPTLDSVLYDNQEFPDPEKFKPEHFLDESGKFKYSDYFKPFSAGKRVCAGEGLARMELFLLLSAILQHFNLKPLVDPKDIDISPVNIGFGCIPPRFKLCVIPRS.

298–303 contacts substrate; sequence FAGTET. C437 is a heme binding site.

The protein belongs to the cytochrome P450 family. Interacts with chaperones HSP70 and HSP90; this interaction is required for initial targeting to mitochondria. Heme is required as a cofactor.

Its subcellular location is the endoplasmic reticulum membrane. The protein resides in the microsome membrane. It localises to the mitochondrion inner membrane. It carries out the reaction an organic molecule + reduced [NADPH--hemoprotein reductase] + O2 = an alcohol + oxidized [NADPH--hemoprotein reductase] + H2O + H(+). The catalysed reaction is (5Z,8Z,11Z)-eicosatrienoate + reduced [NADPH--hemoprotein reductase] + O2 = 19-hydroxy-(5Z,8Z,11Z)-eicosatrienoate + oxidized [NADPH--hemoprotein reductase] + H2O + H(+). It catalyses the reaction (5Z,8Z,11Z,14Z,17Z)-eicosapentaenoate + reduced [NADPH--hemoprotein reductase] + O2 = 19-hydroxy-(5Z,8Z,11Z,14Z,17Z)-eicosapentaenoate + oxidized [NADPH--hemoprotein reductase] + H2O + H(+). The enzyme catalyses (4Z,7Z,10Z,13Z,16Z,19Z)-docosahexaenoate + reduced [NADPH--hemoprotein reductase] + O2 = 21-hydroxy-(4Z,7Z,10Z,13Z,16Z,19Z)-docosahexaenoate + oxidized [NADPH--hemoprotein reductase] + H2O + H(+). It carries out the reaction dodecanoate + reduced [NADPH--hemoprotein reductase] + O2 = 11-hydroxydodecanoate + oxidized [NADPH--hemoprotein reductase] + H2O + H(+). The catalysed reaction is tetradecanoate + reduced [NADPH--hemoprotein reductase] + O2 = 13-hydroxytetradecanoate + oxidized [NADPH--hemoprotein reductase] + H2O + H(+). It catalyses the reaction 4-nitrophenol + NADPH + O2 + H(+) = 4-nitrocatechol + NADP(+) + H2O. It functions in the pathway lipid metabolism; fatty acid metabolism. The omega-1 hydroxylase activity is stimulated by cytochrome b5. A cytochrome P450 monooxygenase involved in the metabolism of fatty acids. Mechanistically, uses molecular oxygen inserting one oxygen atom into a substrate, and reducing the second into a water molecule, with two electrons provided by NADPH via cytochrome P450 reductase (NADPH--hemoprotein reductase). Catalyzes the hydroxylation of carbon-hydrogen bonds. Hydroxylates fatty acids specifically at the omega-1 position displaying the highest catalytic activity for saturated fatty acids. May be involved in the oxidative metabolism of xenobiotics. The polypeptide is Cytochrome P450 2E1 (CYP2E1) (Macaca mulatta (Rhesus macaque)).